Consider the following 634-residue polypeptide: Ankyrin repeat and SOCS box protein 2 (634 aa).

The UIM domain maps to 26–45; the sequence is SEEELVQMAIEQSLADKTRG. The segment at 35-81 is disordered; that stretch reads IEQSLADKTRGPTPAETSVSSQTNHQPGHIHPWTRSSSPPESPPARA. Positions 49 to 60 are enriched in polar residues; the sequence is AETSVSSQTNHQ. ANK repeat units follow at residues 104–133, 137–167, 171–200, 204–233, 237–266, 270–299, 303–332, 336–365, 368–397, 410–439, 440–469, and 476–504; these read AAMD…NLAE, EGWL…TIDQ, QEET…EPDI, SRET…DANH, RGWT…KVEA, YSIT…DINT, DSAS…DANK, DGLL…RTRV, SGIS…DVNT, RRTS…DPNR, DVIS…NIDA, and TAFP…DGEP. A Phosphoserine modification is found at Ser371. Positions 580 to 634 constitute an SOCS box domain; sequence EDWAVIKEKAEPPRPLAHLCRLRVRKAIGKYRIKLLDTLPLPGRLIRYLKYENTQ.

This sequence belongs to the ankyrin SOCS box (ASB) family. In terms of assembly, component of a probable ECS E3 ubiquitin-protein ligase complex which contains CUL5, either RBX1 or RNF7/RBX2, Elongin BC complex (ELOB and ELOC) and ASB2. Interacts with SKP2. Through its interaction with SKP2, likely to bridge the formation of dimeric E3-ubiquitin-protein ligase complexes composed of an ECS complex and an SCF(SKP2) complex. Interacts with JAK2; the interaction targets JAK2 for Notch-mediated proteasomal degradation. Interacts with TCF3/E2A; the interaction is mediated by SKP2 and targets TCF3 for Notch-mediated proteasomal degradation. Interacts with DES. In terms of processing, monoubiquitinated.

Its subcellular location is the cytoplasm. The protein resides in the cytoskeleton. It localises to the stress fiber. The protein localises to the myofibril. It is found in the sarcomere. Its subcellular location is the z line. It functions in the pathway protein modification; protein ubiquitination. In terms of biological role, substrate-recognition component of a SCF-like ECS (Elongin-Cullin-SOCS-box protein) E3 ubiquitin-protein ligase complex which mediates the ubiquitination and subsequent proteasomal degradation of target proteins. Mediates Notch-induced ubiquitination and degradation of substrates including E2A and JAK2. Required during embryonic heart development for complete heart looping. Required for cardiomyocyte differentiation. Involved in myogenic differentiation and targets filamin FLNB for proteasomal degradation but not filamin FLNA. Also targets DES for proteasomal degradation. Acts as a negative regulator of skeletal muscle mass. This is Ankyrin repeat and SOCS box protein 2 from Rattus norvegicus (Rat).